Here is a 199-residue protein sequence, read N- to C-terminus: NAD(P)H dehydrogenase (quinone) (199 aa).

A Flavodoxin-like domain is found at 4-190 (VLVLYYSAYG…AGARYQGQVI (187 aa)). FMN-binding positions include 10 to 15 (SAYGHI) and 78 to 80 (TRF). Tyr-12 is a binding site for NAD(+). Trp-98 provides a ligand contact to substrate. Residues 113 to 119 (STATQHG) and His-134 each bind FMN.

Belongs to the WrbA family. Requires FMN as cofactor.

It carries out the reaction a quinone + NADH + H(+) = a quinol + NAD(+). The catalysed reaction is a quinone + NADPH + H(+) = a quinol + NADP(+). This chain is NAD(P)H dehydrogenase (quinone), found in Rhodopseudomonas palustris (strain BisA53).